The following is a 411-amino-acid chain: Trigger factor (411 aa).

Residues Glu162–Ile240 enclose the PPIase FKBP-type domain.

Belongs to the FKBP-type PPIase family. Tig subfamily.

It is found in the cytoplasm. It catalyses the reaction [protein]-peptidylproline (omega=180) = [protein]-peptidylproline (omega=0). Its function is as follows. Involved in protein export. Acts as a chaperone by maintaining the newly synthesized protein in an open conformation. Functions as a peptidyl-prolyl cis-trans isomerase. This is Trigger factor from Thermodesulfovibrio yellowstonii (strain ATCC 51303 / DSM 11347 / YP87).